A 317-amino-acid chain; its full sequence is U5 small nuclear ribonucleoprotein TSSC4 (317 aa).

The span at 1–19 shows a compositional bias: acidic residues; that stretch reads MAETEAGLEADEPTEDDTL. Residues 1–74 form a disordered region; it reads MAETEAGLEA…PPTGTLTTAV (74 aa). Residues 20–37 are compositionally biased toward low complexity; it reads PSDTVSLSDSDSDLSLPS. Residues serine 57, serine 64, serine 83, and serine 92 each carry the phosphoserine modification. Residues 74–101 form a hom2; mediates interaction with the U5 snRNP complexes and required for spliceosomal tri-snRNP complex assembly region; sequence VQPFHLRGMSSTFSQRSHSIFDCLESAA. Residues 101 to 152 form a disordered region; it reads ARQAPCSAPQTSVSDNGSFRRPVTPPSQTPARGLSRVHGNTGPTRVLPVPDY. The segment covering 108–117 has biased composition (polar residues); sequence APQTSVSDNG. Threonine 124 is modified (phosphothreonine). The interaction with SNRNP200 stretch occupies residues 146–300; the sequence is VLPVPDYVSH…SKKRSRDHFR (155 aa). The tract at residues 147-183 is hom3; mediates interaction with the U5 snRNP complexes; sequence LPVPDYVSHPERWTKYSLEDVSEASEQSNRDAALAFL. Positions 198-238 are hom4; necessary for interaction with the PRPF19 complex and required for spliceosomal tri-snRNP complex assembly; sequence FNQDPSSCGEGRVVFTKPVRDSEARAERKRVLKKGVGSGAG. Position 214 is an N6-acetyllysine (lysine 214). Residues 216-317 are disordered; it reads VRDSEARAER…GPGSERGPSV (102 aa). The span at 240–250 shows a compositional bias: low complexity; the sequence is EAAVELAHLAG.

The protein belongs to the TSSC4 family. As to quaternary structure, interacts in a RNA-independent manner with distinct U5 snRNP-containing complexes, the mono-U5 snRNP and the post-splicing U5 snRNP-PRPF19 complex. Interacts with SNRNP200; the interaction is direct, excludes recruitment of C9ORF78 and WBP4 to SNRNP200 and negatively regulates its RNA helicase activity. Interacts with PRPF8; the interaction is direct. As to expression, expressed in placenta. Widely expressed in embryo and newborn.

It localises to the nucleus. The protein resides in the cytoplasm. Functionally, protein associated with the U5 snRNP, during its maturation and its post-splicing recycling and which is required for spliceosomal tri-snRNP complex assembly in the nucleus. Has a molecular sequestering activity and transiently hinders SNRNP200 binding sites for constitutive splicing factors that intervene later during the assembly of the spliceosome and splicing. Together with its molecular sequestering activity, may also function as a molecular adapter and placeholder, coordinating the assembly of the U5 snRNP and its association with the U4/U6 di-snRNP. This Mus musculus (Mouse) protein is U5 small nuclear ribonucleoprotein TSSC4.